A 321-amino-acid chain; its full sequence is MDEYRELISVLPLETVEYAFAYGSGAIQQQNEDKSEKMVDFVIVTKNAQEFHRDNILKNPQHYSLLRLMGPKMIEKIQCNFAARVYYNTHVKVGKRKIKYGVISYENVKQDLLDWRWIYISGRLHKPVLEVIKPRQDMCDLVTENRRSALHSSLLLLPESFTLKQLFHKIVGLSYTGDFRMVVGEDKNKINKIVEGNYEELLRVYEPLMNDDARLSVMSPAKLIQDGSTTAIYHRLNLLPSEVLNRIQKNMNRVQKRQRDAEEVIFSLAHRHDVAATVETAIGGIIRPVSLSQTAKNAFSAGVTRSIIYSMAKMSKFLKSK.

The protein belongs to the TAM41 family. Mg(2+) is required as a cofactor. Co(2+) serves as cofactor. Requires Cu(2+) as cofactor.

It is found in the mitochondrion inner membrane. The enzyme catalyses a 1,2-diacyl-sn-glycero-3-phosphate + CTP + H(+) = a CDP-1,2-diacyl-sn-glycerol + diphosphate. It functions in the pathway phospholipid metabolism; CDP-diacylglycerol biosynthesis; CDP-diacylglycerol from sn-glycerol 3-phosphate: step 3/3. In terms of biological role, catalyzes the formation of CDP-diacylglycerol (CDP-DAG) from phosphatidic acid (PA) in the mitochondrial inner membrane. Required for the biosynthesis of the dimeric phospholipid cardiolipin, which stabilizes supercomplexes of the mitochondrial respiratory chain in the mitochondrial inner membrane. In Caenorhabditis elegans, this protein is Phosphatidate cytidylyltransferase, mitochondrial.